A 211-amino-acid chain; its full sequence is Somatotropin (211 aa).

The signal sequence occupies residues 1-23; sequence MASGFLLCPVLLAVFFMSPVEVG. His40 contributes to the Zn(2+) binding site. Cys73 and Cys184 are joined by a disulfide. A Zn(2+)-binding site is contributed by Glu193. A disulfide bridge connects residues Cys201 and Cys209.

Belongs to the somatotropin/prolactin family.

The protein localises to the secreted. Its function is as follows. Growth hormone plays an important role in growth control and is involved in the regulation of several anabolic processes. Implicated as an osmoregulatory substance important for seawater adaptation. The polypeptide is Somatotropin (gh) (Lepisosteus osseus (Long-nosed gar)).